Here is a 1771-residue protein sequence, read N- to C-terminus: Myosin-H heavy chain (1771 aa).

In terms of domain architecture, Myosin N-terminal SH3-like spans 7 to 57 (CGKEKVWVPNPEKGWINGDLIKEIPGEGWLVRDENGKEIKIEKDELRMQNP). The 780-residue stretch at 61 to 840 (EGIDDMTSLS…IIANLELLRS (780 aa)) folds into the Myosin motor domain. Residue 154-161 (GESGAGKT) participates in ATP binding. An actin-binding region spans residues 690–712 (LNSLMTTINSTNPHYIRCIKPNT). 3 IQ domains span residues 843–872 (MINS…SSIY), 866–895 (TKHS…ENSA), and 940–969 (RIKK…EAKS). Disordered stretches follow at residues 1070 to 1176 (EKQH…NNVD), 1218 to 1282 (VKKS…PINM), and 1312 to 1343 (LNNG…KHIQ). The segment covering 1077 to 1111 (YKNNEVVGNTSFEGSTTTNNGVTSPPKSSPASPIR) has biased composition (polar residues). Low complexity predominate over residues 1112-1139 (NSINSNSDTTISGSSDDSIDNTDSLILS). Over residues 1143-1153 (HKGEDRKRNHE) the composition is skewed to basic and acidic residues. The stretch at 1180-1224 (RRQFNELEKEYKELKQMDETHKQYIESLKLQITQLEEKVKKSSSH) forms a coiled coil. Low complexity predominate over residues 1253–1281 (NSSSHHQQQQQQHNISPSNSITSTTSPIN). Residues 1427–1695 (TGVLDPIETN…LTSLMDSPKY (269 aa)) enclose the Dilute domain.

Belongs to the TRAFAC class myosin-kinesin ATPase superfamily. Myosin family. In terms of assembly, myosin I heavy chain is single-headed. Dimer of a heavy and a light chain. Inability to self-assemble into filaments.

In terms of biological role, myosin is a protein that binds to actin and has ATPase activity that is activated by actin. In Dictyostelium discoideum (Social amoeba), this protein is Myosin-H heavy chain (myoH).